The following is a 222-amino-acid chain: Neurotrophic factor BDNF precursor form (222 aa).

Positions 1–4 (CMKA) are cleaved as a signal peptide. A propeptide spanning residues 5–113 (APMKEVSVRG…AANMSMRVRR (109 aa)) is cleaved from the precursor. A glycan (N-linked (GlcNAc...) asparagine) is linked at asparagine 106. 2 disulfides stabilise this stretch: cysteine 126/cysteine 193 and cysteine 171/cysteine 222.

It belongs to the NGF-beta family.

The protein localises to the secreted. Functionally, promotes the survival of neuronal populations that are all located either in the central nervous system or directly connected to it. The sequence is that of Neurotrophic factor BDNF precursor form (BDNF) from Xenopeltis unicolor (Sunbeam snake).